We begin with the raw amino-acid sequence, 668 residues long: DNA ligase (668 aa).

NAD(+) contacts are provided by residues 32 to 36 (DAEYD), 81 to 82 (SL), and Glu111. The active-site N6-AMP-lysine intermediate is Lys113. NAD(+)-binding residues include Arg134, Glu171, Lys290, and Lys314. Zn(2+)-binding residues include Cys408, Cys411, Cys426, and Cys432. In terms of domain architecture, BRCT spans 591 to 668 (EEDLSLKGQT…DEEALIAILS (78 aa)).

This sequence belongs to the NAD-dependent DNA ligase family. LigA subfamily. Mg(2+) is required as a cofactor. The cofactor is Mn(2+).

The catalysed reaction is NAD(+) + (deoxyribonucleotide)n-3'-hydroxyl + 5'-phospho-(deoxyribonucleotide)m = (deoxyribonucleotide)n+m + AMP + beta-nicotinamide D-nucleotide.. Its function is as follows. DNA ligase that catalyzes the formation of phosphodiester linkages between 5'-phosphoryl and 3'-hydroxyl groups in double-stranded DNA using NAD as a coenzyme and as the energy source for the reaction. It is essential for DNA replication and repair of damaged DNA. The chain is DNA ligase from Shewanella pealeana (strain ATCC 700345 / ANG-SQ1).